The following is a 102-amino-acid chain: UPF0473 protein SERP1179 (102 aa).

It belongs to the UPF0473 family.

The protein is UPF0473 protein SERP1179 of Staphylococcus epidermidis (strain ATCC 35984 / DSM 28319 / BCRC 17069 / CCUG 31568 / BM 3577 / RP62A).